A 79-amino-acid polypeptide reads, in one-letter code: Defensin-like protein 3 (79 aa).

The signal sequence occupies residues 1–29; sequence MAKFASIVALLFAALVVFAAFEAPTVVEA. 4 disulfide bridges follow: cysteine 32-cysteine 79, cysteine 43-cysteine 64, cysteine 49-cysteine 73, and cysteine 53-cysteine 75.

This sequence belongs to the DEFL family.

The protein resides in the secreted. Possesses antifungal activity sensitive to inorganic cations. This is Defensin-like protein 3 (AFP3) from Raphanus sativus (Radish).